The following is a 633-amino-acid chain: Terminal nucleotidyltransferase 4B (633 aa).

The interval 1-115 (MFRSGERPLG…GGGRADGGGG (115 aa)) is disordered. Polar residues predominate over residues 25-34 (ETTNNNNNHH). Low complexity-rich tracts occupy residues 36-52 (PAAW…ASPV) and 60-70 (RPAAALPASES). Over residues 87 to 98 (ASTYGLNYSLLQ) the composition is skewed to polar residues. Residues 103–115 (RAAGGGRADGGGG) are compositionally biased toward gly residues. Aspartate 191 and aspartate 193 together coordinate Mg(2+). Residues glycine 254, lysine 279, serine 297, tyrosine 298, asparagine 382, and arginine 386 each contribute to the ATP site. The region spanning 322 to 382 (NYGVLLIEFF…YIEDPLQPGN (61 aa)) is the PAP-associated domain. The segment at 484 to 633 (LGKCRSNASE…RDAPLSELCR (150 aa)) is disordered. Residues 492–519 (SEPLSKHSSNSSSGPVSSSSATQSSSSD) are compositionally biased toward low complexity. Residue lysine 531 forms a Glycyl lysine isopeptide (Lys-Gly) (interchain with G-Cter in SUMO2) linkage. The segment covering 542 to 552 (RVGSQDVSLEV) has biased composition (polar residues). The residue at position 545 (serine 545) is a Phosphoserine. Glycyl lysine isopeptide (Lys-Gly) (interchain with G-Cter in SUMO2) cross-links involve residues lysine 558, lysine 573, and lysine 587. Over residues 559 to 614 (MQSTQTTNTPNNANKSQHGSARLFRSSSKGFQGTAQTSHGALMTSKQHQGKSNTQY) the composition is skewed to polar residues. The short motif at 618-624 (KKRRHKR) is the Basic, involved in binding of the RNA primer element.

It belongs to the DNA polymerase type-B-like family. In terms of assembly, component of a nucleolar TRAMP-like complex, an ATP-dependent exosome regulatory complex consisting of a helicase (MTREX), an oligadenylate polymerase (TENT4B or TENT4A), and a substrate specific RNA-binding factor (ZCCHC7 or ZCCHC8). Several TRAMP-like complexes exist with specific compositions and are associated with nuclear, or nucleolar RNA exosomes. Requires Mg(2+) as cofactor. Mn(2+) serves as cofactor.

Its subcellular location is the nucleus. It localises to the nucleolus. The protein localises to the cytoplasm. The catalysed reaction is RNA(n) + ATP = RNA(n)-3'-adenine ribonucleotide + diphosphate. Terminal nucleotidyltransferase that catalyzes preferentially the transfer of ATP and GTP on RNA 3' poly(A) tail creating a heterogeneous 3' poly(A) tail leading to mRNAs stabilization by protecting mRNAs from active deadenylation. Also functions as a catalytic subunit of a TRAMP-like complex which has a poly(A) RNA polymerase activity and is involved in a post-transcriptional quality control mechanism. Polyadenylation with short oligo(A) tails is required for the degradative activity of the exosome on several of its nuclear RNA substrates. Doesn't need a cofactor for polyadenylation activity (in vitro). Plays a role in replication-dependent histone mRNA degradation, probably through terminal uridylation of mature histone mRNAs. May play a role in sister chromatid cohesion. In Mus musculus (Mouse), this protein is Terminal nucleotidyltransferase 4B.